Consider the following 1396-residue polypeptide: DNA-directed RNA polymerase subunit beta' (1396 aa).

Positions 71, 73, 86, and 89 each coordinate Zn(2+). 3 residues coordinate Mg(2+): D462, D464, and D466. Positions 810, 884, 891, and 894 each coordinate Zn(2+). The segment covering 1372–1382 (DEQLAQQREDA) has biased composition (basic and acidic residues). Residues 1372 to 1396 (DEQLAQQREDAMEPLPAEIALSDAE) form a disordered region.

This sequence belongs to the RNA polymerase beta' chain family. The RNAP catalytic core consists of 2 alpha, 1 beta, 1 beta' and 1 omega subunit. When a sigma factor is associated with the core the holoenzyme is formed, which can initiate transcription. Mg(2+) is required as a cofactor. The cofactor is Zn(2+).

It catalyses the reaction RNA(n) + a ribonucleoside 5'-triphosphate = RNA(n+1) + diphosphate. Functionally, DNA-dependent RNA polymerase catalyzes the transcription of DNA into RNA using the four ribonucleoside triphosphates as substrates. This Caulobacter vibrioides (strain ATCC 19089 / CIP 103742 / CB 15) (Caulobacter crescentus) protein is DNA-directed RNA polymerase subunit beta'.